The sequence spans 151 residues: Small ribosomal subunit protein uS15 (151 aa).

This sequence belongs to the universal ribosomal protein uS15 family. In terms of assembly, component of the small ribosomal subunit.

The protein resides in the cytoplasm. In terms of biological role, component of the small ribosomal subunit. The ribosome is a large ribonucleoprotein complex responsible for the synthesis of proteins in the cell. In Xenopus laevis (African clawed frog), this protein is Small ribosomal subunit protein uS15 (rps13).